The primary structure comprises 321 residues: Lipoyl synthase (321 aa).

7 residues coordinate [4Fe-4S] cluster: cysteine 68, cysteine 73, cysteine 79, cysteine 94, cysteine 98, cysteine 101, and serine 308. In terms of domain architecture, Radical SAM core spans 80–297 (FNHGTATFMI…KELAESIGFT (218 aa)).

The protein belongs to the radical SAM superfamily. Lipoyl synthase family. [4Fe-4S] cluster serves as cofactor.

Its subcellular location is the cytoplasm. It carries out the reaction [[Fe-S] cluster scaffold protein carrying a second [4Fe-4S](2+) cluster] + N(6)-octanoyl-L-lysyl-[protein] + 2 oxidized [2Fe-2S]-[ferredoxin] + 2 S-adenosyl-L-methionine + 4 H(+) = [[Fe-S] cluster scaffold protein] + N(6)-[(R)-dihydrolipoyl]-L-lysyl-[protein] + 4 Fe(3+) + 2 hydrogen sulfide + 2 5'-deoxyadenosine + 2 L-methionine + 2 reduced [2Fe-2S]-[ferredoxin]. It participates in protein modification; protein lipoylation via endogenous pathway; protein N(6)-(lipoyl)lysine from octanoyl-[acyl-carrier-protein]: step 2/2. In terms of biological role, catalyzes the radical-mediated insertion of two sulfur atoms into the C-6 and C-8 positions of the octanoyl moiety bound to the lipoyl domains of lipoate-dependent enzymes, thereby converting the octanoylated domains into lipoylated derivatives. This Shewanella halifaxensis (strain HAW-EB4) protein is Lipoyl synthase.